Here is a 104-residue protein sequence, read N- to C-terminus: ATP synthase subunit c (104 aa).

The next 2 helical transmembrane spans lie at 31-51 and 75-95; these read SMIA…IGMG and MFIA…IALI.

The protein belongs to the ATPase C chain family. As to quaternary structure, F-type ATPases have 2 components, F(1) - the catalytic core - and F(0) - the membrane proton channel. F(1) has five subunits: alpha(3), beta(3), gamma(1), delta(1), epsilon(1). F(0) has three main subunits: a(1), b(2) and c(10-14). The alpha and beta chains form an alternating ring which encloses part of the gamma chain. F(1) is attached to F(0) by a central stalk formed by the gamma and epsilon chains, while a peripheral stalk is formed by the delta and b chains.

The protein localises to the cell inner membrane. In terms of biological role, f(1)F(0) ATP synthase produces ATP from ADP in the presence of a proton or sodium gradient. F-type ATPases consist of two structural domains, F(1) containing the extramembraneous catalytic core and F(0) containing the membrane proton channel, linked together by a central stalk and a peripheral stalk. During catalysis, ATP synthesis in the catalytic domain of F(1) is coupled via a rotary mechanism of the central stalk subunits to proton translocation. Key component of the F(0) channel; it plays a direct role in translocation across the membrane. A homomeric c-ring of between 10-14 subunits forms the central stalk rotor element with the F(1) delta and epsilon subunits. This chain is ATP synthase subunit c, found in Sulfurimonas denitrificans (strain ATCC 33889 / DSM 1251) (Thiomicrospira denitrificans (strain ATCC 33889 / DSM 1251)).